A 457-amino-acid chain; its full sequence is tRNA modification GTPase MnmE (457 aa).

3 residues coordinate (6S)-5-formyl-5,6,7,8-tetrahydrofolate: Arg-23, Glu-86, and Arg-125. The 157-residue stretch at 221–377 (GVSVLIAGKP…LREAVFETFI (157 aa)) folds into the TrmE-type G domain. Residue Asn-231 coordinates K(+). GTP contacts are provided by residues 231 to 236 (NVGKSS), 250 to 256 (TSVPGTT), and 275 to 278 (DTAG). Mg(2+) is bound at residue Ser-235. Residues Thr-250, Val-252, and Thr-255 each coordinate K(+). Thr-256 lines the Mg(2+) pocket. Lys-457 provides a ligand contact to (6S)-5-formyl-5,6,7,8-tetrahydrofolate.

This sequence belongs to the TRAFAC class TrmE-Era-EngA-EngB-Septin-like GTPase superfamily. TrmE GTPase family. As to quaternary structure, homodimer. Heterotetramer of two MnmE and two MnmG subunits. K(+) is required as a cofactor.

It is found in the cytoplasm. Exhibits a very high intrinsic GTPase hydrolysis rate. Involved in the addition of a carboxymethylaminomethyl (cmnm) group at the wobble position (U34) of certain tRNAs, forming tRNA-cmnm(5)s(2)U34. This Geobacter metallireducens (strain ATCC 53774 / DSM 7210 / GS-15) protein is tRNA modification GTPase MnmE.